Reading from the N-terminus, the 575-residue chain is MQNTQTPSPMPFGKYTPFQDQIRVELPDRTWPTRTITKAPRWCAVDLRDGNQALIDPMNSERKLRMFTLLVQMGYKDIEVGFPSASQTDFDFVRTLIENDLIPDDVRIQVLTQAREHLIERTYESLRGAKQAIVHLYNSTSVLQRRVVFGMDEDGIVDLALQGARLCRKFEETIPGTTVYYEYSPESYTGTELEFAARICNAVVAVFEPTPERQVIVNLPATVEMATPNVYADSIEWMSRHLDQRENVIISLHPHNDRGTGVAAAELGYLAGADRIEGCLFGNGERTGNVDLVTLGMNLFSQGIDPQIDFSDIDHIRRTVEHCNQLPVGERVPYGGDLVFTAFSGSHQDAIKKGLEAMERDAAAAGKTVDEIPWAVPYLPIDPRDVGRSYEAVIRVNSQSGKGGVAYLLKAEHQLDLPRRLQIEFSRVIQERTDAQGGEVSAAQIFDVFSDEYLPSGSGTPEWGRFALRGTRSVSVVDGADTLEVDLHDDGAENTVRGTGNGPIAAFCAALGSRGVDVRVLDYAEHALSAGGDAQAAAYVECAVAGRVLWGVGIDHNITTASLKAIVSAVNRALR.

Positions 40–314 constitute a Pyruvate carboxyltransferase domain; that stretch reads PRWCAVDLRD…DPQIDFSDID (275 aa). Mg(2+)-binding residues include aspartate 49, histidine 253, histidine 255, and asparagine 289. Residues 456-575 form a regulatory domain region; the sequence is SGSGTPEWGR…IVSAVNRALR (120 aa).

This sequence belongs to the alpha-IPM synthase/homocitrate synthase family. LeuA type 2 subfamily. Homodimer. Requires Mg(2+) as cofactor.

It is found in the cytoplasm. It catalyses the reaction 3-methyl-2-oxobutanoate + acetyl-CoA + H2O = (2S)-2-isopropylmalate + CoA + H(+). It functions in the pathway amino-acid biosynthesis; L-leucine biosynthesis; L-leucine from 3-methyl-2-oxobutanoate: step 1/4. Its function is as follows. Catalyzes the condensation of the acetyl group of acetyl-CoA with 3-methyl-2-oxobutanoate (2-ketoisovalerate) to form 3-carboxy-3-hydroxy-4-methylpentanoate (2-isopropylmalate). This chain is 2-isopropylmalate synthase, found in Kineococcus radiotolerans (strain ATCC BAA-149 / DSM 14245 / SRS30216).